The primary structure comprises 214 residues: Membrane-spanning 4-domains subfamily A member 3 (214 aa).

The disordered stretch occupies residues 1–31 (MASHEVDNAELGSASAHGTPGSEAGPEELNT). Residues 1-49 (MASHEVDNAELGSASAHGTPGSEAGPEELNTSVYQPIDGSPDYQKAKLQ) lie on the Cytoplasmic side of the membrane. Residues 50-70 (VLGAIQILNAAMILALGVFLG) traverse the membrane as a helical segment. Topologically, residues 71–81 (SLQYPYHFQKH) are extracellular. The helical transmembrane segment at 82–102 (FFFFTFYTGYPIWGAVFFCSS) threads the bilayer. Residues 103-124 (GTLSVVAGIKPTRTWIQNSFGM) are Cytoplasmic-facing. The chain crosses the membrane as a helical span at residues 125-145 (NIASATIALVGTAFLSLNIAV). Residues 146–175 (NIQSLRSCHSSSESPDLCNYMGSISNGMVS) lie on the Extracellular side of the membrane. The helical transmembrane segment at 176 to 196 (LLLILTLLELCVTISTIAMWC) threads the bilayer. At 197–214 (NANCCNSREEISSPPNSV) the chain is on the cytoplasmic side.

This sequence belongs to the MS4A family. In terms of assembly, interacts with CDKN3. Interacts with CDKN3-CDK2 complexes through its binding to CDKN3; this interaction facilitates dissociation of cyclin A from CDKN3-CDK2 complexes. Expressed specifically in hematopoietic cells and tissues.

The protein localises to the endomembrane system. It localises to the cytoplasm. It is found in the perinuclear region. Its function is as follows. Hematopoietic modulator for the G1-S cell cycle transition. Modulates the level of phosphorylation of cyclin-dependent kinase 2 (CDK2) through its direct binding to cyclin-dependent kinase inhibitor 3 (CDKN3/KAP). The polypeptide is Membrane-spanning 4-domains subfamily A member 3 (MS4A3) (Homo sapiens (Human)).